The following is a 484-amino-acid chain: Aspartyl/glutamyl-tRNA(Asn/Gln) amidotransferase subunit B (484 aa).

The protein belongs to the GatB/GatE family. GatB subfamily. As to quaternary structure, heterotrimer of A, B and C subunits.

It catalyses the reaction L-glutamyl-tRNA(Gln) + L-glutamine + ATP + H2O = L-glutaminyl-tRNA(Gln) + L-glutamate + ADP + phosphate + H(+). It carries out the reaction L-aspartyl-tRNA(Asn) + L-glutamine + ATP + H2O = L-asparaginyl-tRNA(Asn) + L-glutamate + ADP + phosphate + 2 H(+). In terms of biological role, allows the formation of correctly charged Asn-tRNA(Asn) or Gln-tRNA(Gln) through the transamidation of misacylated Asp-tRNA(Asn) or Glu-tRNA(Gln) in organisms which lack either or both of asparaginyl-tRNA or glutaminyl-tRNA synthetases. The reaction takes place in the presence of glutamine and ATP through an activated phospho-Asp-tRNA(Asn) or phospho-Glu-tRNA(Gln). The polypeptide is Aspartyl/glutamyl-tRNA(Asn/Gln) amidotransferase subunit B (Cupriavidus metallidurans (strain ATCC 43123 / DSM 2839 / NBRC 102507 / CH34) (Ralstonia metallidurans)).